The sequence spans 486 residues: Replication factor C large subunit (486 aa).

46 to 53 (GPPGSGKT) serves as a coordination point for ATP. A disordered region spans residues 419–486 (VKKETPKKTE…KKQATLDSFF (68 aa)). Composition is skewed to basic and acidic residues over residues 420-432 (KKET…KPKE) and 442-480 (RISE…KKQA).

Belongs to the activator 1 small subunits family. RfcL subfamily. Heteromultimer composed of small subunits (RfcS) and large subunits (RfcL).

Part of the RFC clamp loader complex which loads the PCNA sliding clamp onto DNA. The chain is Replication factor C large subunit from Methanococcus maripaludis (strain DSM 14266 / JCM 13030 / NBRC 101832 / S2 / LL).